Consider the following 429-residue polypeptide: Formate-dependent phosphoribosylglycinamide formyltransferase (429 aa).

N(1)-(5-phospho-beta-D-ribosyl)glycinamide contacts are provided by residues 26–27 and E86; that span reads EL. ATP contacts are provided by residues R118, K159, 199 to 202, and E207; that span reads EEHI. The ATP-grasp domain maps to 123–319; the sequence is ETLVKEAKVP…EFGLHLRAVL (197 aa). Mg(2+) is bound by residues E276 and E288. Residues D295, K375, and 382 to 383 each bind N(1)-(5-phospho-beta-D-ribosyl)glycinamide; that span reads RR.

Belongs to the PurK/PurT family. In terms of assembly, homodimer.

The enzyme catalyses N(1)-(5-phospho-beta-D-ribosyl)glycinamide + formate + ATP = N(2)-formyl-N(1)-(5-phospho-beta-D-ribosyl)glycinamide + ADP + phosphate + H(+). The protein operates within purine metabolism; IMP biosynthesis via de novo pathway; N(2)-formyl-N(1)-(5-phospho-D-ribosyl)glycinamide from N(1)-(5-phospho-D-ribosyl)glycinamide (formate route): step 1/1. Functionally, involved in the de novo purine biosynthesis. Catalyzes the transfer of formate to 5-phospho-ribosyl-glycinamide (GAR), producing 5-phospho-ribosyl-N-formylglycinamide (FGAR). Formate is provided by PurU via hydrolysis of 10-formyl-tetrahydrofolate. The sequence is that of Formate-dependent phosphoribosylglycinamide formyltransferase from Pyrococcus furiosus (strain ATCC 43587 / DSM 3638 / JCM 8422 / Vc1).